We begin with the raw amino-acid sequence, 354 residues long: Ephrin-4 (354 aa).

The signal sequence occupies residues 1–22 (MKRPLDFLLAICLILLRSSTFA). An Ephrin RBD domain is found at 23-173 (DEHTVHWNST…SKNMRLSMKV (151 aa)). Residue asparagine 30 is glycosylated (N-linked (GlcNAc...) asparagine). Intrachain disulfides connect cysteine 55-cysteine 92 and cysteine 80-cysteine 162. Residues 173-196 (VLSSQPTPSPSSKPARSRTDARRQ) form a disordered region. Low complexity predominate over residues 175-186 (SSQPTPSPSSKP). Serine 335 is lipidated: GPI-anchor amidated serine. Residues 336 to 354 (SSSLPTFLIVFLIAVNLLF) constitute a propeptide, removed in mature form.

It belongs to the ephrin family. Post-translationally, may undergo proteolysis by metalloprotease sup-17 to give rise to a soluble form.

The protein localises to the cell membrane. Functionally, regulates the formation or stabilization of cell-cell contacts at several stages of epithelial morphogenesis. In early embryonic development, involved in ventral closure of the epidermis. During male tail morphogenesis, regulates precursor cell sorting together with mab-20 and allows the formation of distinct sensory rays. Probably acts as a ligand for lad-2 to regulate axon guidance of several neurons including SDQL, SDQR, SMD and PLN neurons during neurogenesis. This chain is Ephrin-4 (efn-4), found in Caenorhabditis briggsae.